The chain runs to 59 residues: Large ribosomal subunit protein uL30 (59 aa).

It belongs to the universal ribosomal protein uL30 family. Part of the 50S ribosomal subunit.

This Yersinia pseudotuberculosis serotype I (strain IP32953) protein is Large ribosomal subunit protein uL30.